Reading from the N-terminus, the 383-residue chain is S-adenosylmethionine synthase (383 aa).

His-22 serves as a coordination point for ATP. Asp-24 is a binding site for Mg(2+). K(+) is bound at residue Glu-50. L-methionine is bound by residues Glu-63 and Gln-99. Positions 99 to 109 are flexible loop; sequence QSSEINQAVQS. ATP contacts are provided by residues 160–162, Asp-235, 241–242, Ser-258, and Lys-262; these read DMK and RK. Asp-235 provides a ligand contact to L-methionine. Lys-266 is an L-methionine binding site.

This sequence belongs to the AdoMet synthase family. As to quaternary structure, homotetramer; dimer of dimers. The cofactor is Mg(2+). K(+) is required as a cofactor.

The protein localises to the cytoplasm. The catalysed reaction is L-methionine + ATP + H2O = S-adenosyl-L-methionine + phosphate + diphosphate. It participates in amino-acid biosynthesis; S-adenosyl-L-methionine biosynthesis; S-adenosyl-L-methionine from L-methionine: step 1/1. In terms of biological role, catalyzes the formation of S-adenosylmethionine (AdoMet) from methionine and ATP. The overall synthetic reaction is composed of two sequential steps, AdoMet formation and the subsequent tripolyphosphate hydrolysis which occurs prior to release of AdoMet from the enzyme. The polypeptide is S-adenosylmethionine synthase (Mycoplasma pneumoniae (strain ATCC 29342 / M129 / Subtype 1) (Mycoplasmoides pneumoniae)).